A 195-amino-acid chain; its full sequence is Putative NADH dehydrogenase/NAD(P)H nitroreductase CC_0061 (195 aa).

This sequence belongs to the nitroreductase family. HadB/RutE subfamily. It depends on FMN as a cofactor.

The chain is Putative NADH dehydrogenase/NAD(P)H nitroreductase CC_0061 from Caulobacter vibrioides (strain ATCC 19089 / CIP 103742 / CB 15) (Caulobacter crescentus).